We begin with the raw amino-acid sequence, 568 residues long: Protein OCTOPUS-like (568 aa).

7 disordered regions span residues 1–27, 78–99, 168–203, 242–276, 360–428, 446–512, and 526–558; these read MNLS…RLST, LFKP…RPGF, EEAE…ELKP, QKQK…PRFS, PGGS…DKKS, DDEE…SKDG, and RSWK…SHGH. The segment covering 82–93 has biased composition (low complexity); it reads SSSGTNNSNGNG. The segment covering 168–179 has biased composition (acidic residues); that stretch reads EEAEIEEDEENG. Residues 180-193 show a composition bias toward basic and acidic residues; sequence EKDPGEIVEEKSSE. Phosphoserine is present on Ser260. The span at 400-423 shows a compositional bias: polar residues; the sequence is SVSNSTTTIDSNSMETAENKGNQN. Residues 532–546 are compositionally biased toward gly residues; it reads GGSGGGGGGGGGGGW.

This sequence belongs to the OCTOPUS family. Post-translationally, phosphorylation at Ser-260 amplifies the promotion of protophloem differentiation.

The protein resides in the cell membrane. It is found in the cytoplasm. In terms of biological role, potentiates primary root protophloem differentiation. Regulates roots architecture. This chain is Protein OCTOPUS-like, found in Arabidopsis thaliana (Mouse-ear cress).